Consider the following 181-residue polypeptide: Large ribosomal subunit protein uL5 (181 aa).

It belongs to the universal ribosomal protein uL5 family. As to quaternary structure, part of the 50S ribosomal subunit; part of the 5S rRNA/L5/L18/L25 subcomplex. Contacts the 5S rRNA and the P site tRNA. Forms a bridge to the 30S subunit in the 70S ribosome.

In terms of biological role, this is one of the proteins that bind and probably mediate the attachment of the 5S RNA into the large ribosomal subunit, where it forms part of the central protuberance. In the 70S ribosome it contacts protein S13 of the 30S subunit (bridge B1b), connecting the 2 subunits; this bridge is implicated in subunit movement. Contacts the P site tRNA; the 5S rRNA and some of its associated proteins might help stabilize positioning of ribosome-bound tRNAs. The sequence is that of Large ribosomal subunit protein uL5 from Sulfurimonas denitrificans (strain ATCC 33889 / DSM 1251) (Thiomicrospira denitrificans (strain ATCC 33889 / DSM 1251)).